The chain runs to 210 residues: DNA-directed RNA polymerases I, II, and III subunit RPABC1 (210 aa).

N-acetylmethionine is present on Met-1. Lys-81 participates in a covalent cross-link: Glycyl lysine isopeptide (Lys-Gly) (interchain with G-Cter in SUMO2).

It belongs to the archaeal Rpo5/eukaryotic RPB5 RNA polymerase subunit family. As to quaternary structure, component of the RNA polymerase I (Pol I), RNA polymerase II (Pol II) and RNA polymerase III (Pol III) complexes consisting of at least 13, 12 and 17 subunits, respectively. Pol I complex consists of a ten-subunit catalytic core composed of POLR1A/RPA1, POLR1B/RPA2, POLR1C/RPAC1, POLR1D/RPAC2, POLR1H/RPA12, POLR2E/RPABC1, POLR2F/RPABC2, POLR2H/RPABC3, POLR2K/RPABC4 and POLR2L/RPABC5; a mobile stalk subunit POLR1F/RPA43 protruding from the core and additional subunits homologous to general transcription factors POLR1E/RPA49 and POLR1G/RPA34. Part of Pol I pre-initiation complex (PIC), in which Pol I core assembles with RRN3 and promoter-bound UTBF and SL1/TIF-IB complex. Pol II complex contains a ten-subunit catalytic core composed of POLR2A/RPB1, POLR2B/RPB2, POLR2C/RPB3, POLR2I/RPB9, POLR2J/RPB11, POLR2E/RPABC1, POLR2F/RPABC2, POLR2H/RPABC3, POLR2K/RPABC4 and POLR2L/RPABC5 and a mobile stalk composed of two subunits POLR2D/RPB4 and POLR2G/RPB7. Part of Pol II(G) complex, in which Pol II core associates with an additional subunit POLR2M; unlike conventional Pol II, Pol II(G) functions as a transcriptional repressor. Part of TBP-based Pol II pre-initiation complex (PIC), in which Pol II core assembles with general transcription factors and other specific initiation factors including GTF2E1, GTF2E2, GTF2F1, GTF2F2, TCEA1, ERCC2, ERCC3, GTF2H2, GTF2H3, GTF2H4, GTF2H5, GTF2A1, GTF2A2, GTF2B and TBP; this large multi-subunit PIC complex mediates DNA unwinding and targets Pol II core to the transcription start site where the first phosphodiester bond forms. In Pol II complex, this subunit is present in 2-fold molar excess over the other subunits. Pol III complex consists of a ten-subunit catalytic core composed of POLR3A/RPC1, POLR3B/RPC2, POLR1C/RPAC1, POLR1D/RPAC2, POLR3K/RPC10, POLR2E/RPABC1, POLR2F/RPABC2, POLR2H/RPABC3, POLR2K/RPABC4 and POLR2L/RPABC5; a mobile stalk composed of two subunits POLR3H/RPC8 and CRCP/RPC9, protruding from the core and functioning primarily in transcription initiation; and additional subunits homologous to general transcription factors of the RNA polymerase II machinery, POLR3C/RPC3-POLR3F/RPC6-POLR3G/RPC7 heterotrimer required for transcription initiation and POLR3D/RPC4-POLR3E/RPC5 heterodimer involved in both transcription initiation and termination. Component of the PAQosome complex which is responsible for the biogenesis of several protein complexes and which consists of R2TP complex members RUVBL1, RUVBL2, RPAP3 and PIH1D1, URI complex members PFDN2, PFDN6, PDRG1, UXT and URI1 as well as ASDURF, POLR2E and DNAAF10/WDR92. Interacts with URI1.

It localises to the nucleus. Its subcellular location is the nucleolus. Its function is as follows. DNA-dependent RNA polymerase catalyzes the transcription of DNA into RNA using the four ribonucleoside triphosphates as substrates. Common component of RNA polymerases I, II and III which synthesize ribosomal RNA precursors, mRNA precursors and many functional non-coding RNAs, and small RNAs, such as 5S rRNA and tRNAs, respectively. Pol II is the central component of the basal RNA polymerase II transcription machinery. Pols are composed of mobile elements that move relative to each other. In Pol II, POLR2E/RPABC1 is part of the lower jaw surrounding the central large cleft and thought to grab the incoming DNA template. Seems to be the major component in this process. This Mus musculus (Mouse) protein is DNA-directed RNA polymerases I, II, and III subunit RPABC1.